We begin with the raw amino-acid sequence, 843 residues long: Pullulanase (843 aa).

Positions 1 to 19 are cleaved as a signal peptide; it reads MKTKLWLLLVLLLSALIFS. Aspartate 535 functions as the Nucleophile in the catalytic mechanism. Glutamate 564 acts as the Proton donor in catalysis.

It belongs to the glycosyl hydrolase 13 family.

It carries out the reaction Hydrolysis of (1-&gt;6)-alpha-D-glucosidic linkages in pullulan, amylopectin and glycogen, and in the alpha- and beta-limit dextrins of amylopectin and glycogen.. The sequence is that of Pullulanase (pulA) from Thermotoga maritima (strain ATCC 43589 / DSM 3109 / JCM 10099 / NBRC 100826 / MSB8).